The primary structure comprises 251 residues: Ubiquinone/menaquinone biosynthesis C-methyltransferase UbiE (251 aa).

Residues threonine 74, aspartate 95, and 123 to 124 contribute to the S-adenosyl-L-methionine site; that span reads NA.

It belongs to the class I-like SAM-binding methyltransferase superfamily. MenG/UbiE family.

The enzyme catalyses a 2-demethylmenaquinol + S-adenosyl-L-methionine = a menaquinol + S-adenosyl-L-homocysteine + H(+). It carries out the reaction a 2-methoxy-6-(all-trans-polyprenyl)benzene-1,4-diol + S-adenosyl-L-methionine = a 5-methoxy-2-methyl-3-(all-trans-polyprenyl)benzene-1,4-diol + S-adenosyl-L-homocysteine + H(+). It participates in quinol/quinone metabolism; menaquinone biosynthesis; menaquinol from 1,4-dihydroxy-2-naphthoate: step 2/2. It functions in the pathway cofactor biosynthesis; ubiquinone biosynthesis. In terms of biological role, methyltransferase required for the conversion of demethylmenaquinol (DMKH2) to menaquinol (MKH2) and the conversion of 2-polyprenyl-6-methoxy-1,4-benzoquinol (DDMQH2) to 2-polyprenyl-3-methyl-6-methoxy-1,4-benzoquinol (DMQH2). This chain is Ubiquinone/menaquinone biosynthesis C-methyltransferase UbiE, found in Shewanella putrefaciens (strain CN-32 / ATCC BAA-453).